A 206-amino-acid polypeptide reads, in one-letter code: Ribonuclease HII (206 aa).

The 189-residue stretch at 18–206 (LRIAGVDEVG…PVHNILYQEK (189 aa)) folds into the RNase H type-2 domain. A divalent metal cation is bound by residues aspartate 24, glutamate 25, and aspartate 115.

It belongs to the RNase HII family. Requires Mn(2+) as cofactor. Mg(2+) serves as cofactor.

It localises to the cytoplasm. It carries out the reaction Endonucleolytic cleavage to 5'-phosphomonoester.. Functionally, endonuclease that specifically degrades the RNA of RNA-DNA hybrids. The polypeptide is Ribonuclease HII (Dinoroseobacter shibae (strain DSM 16493 / NCIMB 14021 / DFL 12)).